We begin with the raw amino-acid sequence, 76 residues long: Translational regulator CsrA (76 aa).

Belongs to the CsrA/RsmA family. In terms of assembly, homodimer; the beta-strands of each monomer intercalate to form a hydrophobic core, while the alpha-helices form wings that extend away from the core.

Its subcellular location is the cytoplasm. Its function is as follows. A translational regulator that binds mRNA to regulate translation initiation and/or mRNA stability. Usually binds in the 5'-UTR at or near the Shine-Dalgarno sequence preventing ribosome-binding, thus repressing translation. Its main target seems to be the major flagellin gene, while its function is anatagonized by FliW. The polypeptide is Translational regulator CsrA (Wolinella succinogenes (strain ATCC 29543 / DSM 1740 / CCUG 13145 / JCM 31913 / LMG 7466 / NCTC 11488 / FDC 602W) (Vibrio succinogenes)).